The sequence spans 393 residues: Staphopain B (393 aa).

The signal sequence occupies residues 1-36 (MNSSYKSRVFNIISIIMVSMLILSLGAFANNNKAKA). A propeptide spanning residues 37 to 219 (DSHSKQLEIN…KVEENEAIQE (183 aa)) is cleaved from the precursor. Residues cysteine 243, histidine 340, and asparagine 360 contribute to the active site.

The protein belongs to the peptidase C47 family. As to quaternary structure, in the cytoplasm, prematurely activated/folded SspB forms a stable non-covalent complex with SspC. In terms of processing, proteolytically cleaved by staphylococcal serine protease (SspA).

It is found in the secreted. With respect to regulation, prematurely activated/folded staphopain B is inhibited by staphostatin B (SspC), which is probably required to protect staphylococcal cytoplasmic proteins from degradation by SspB. Cysteine protease that plays an important role in the inhibition of host innate immune response. Degrades host elastin, fibrogen, fibronectin and kininogen. Blocks phagocytosis of opsonised S.aureus by neutrophils and monocytes by inducing their death in a proteolytic activity-dependent manner. Decreases surface expression of the 'don't eat me' signal CD31 on neutrophils. Cleaves host galectin-3/LGALS3, thereby inhibiting the neutrophil-activating ability of the lectin. This chain is Staphopain B (sspB), found in Staphylococcus aureus (strain MSSA476).